A 644-amino-acid polypeptide reads, in one-letter code: Phosphatidylinositol polyphosphate 5-phosphatase type IV (644 aa).

The tract at residues 1-193 is disordered; it reads MPSKAENLRP…RLPSLLPPRP (193 aa). 8 consecutive repeat copies span residues 10–13, 15–18, 28–31, 39–42, 55–58, 69–71, 72–74, and 75–78. Residues 10–242 are 13 X 4 AA repeats of P-X-X-P; the sequence is PSEPAPQPPE…SLGPGRPRSP (233 aa). Basic and acidic residues predominate over residues 78-90; it reads PRLERALSLDDKG. S99 is subject to Phosphoserine. Positions 107–118 are enriched in polar residues; that stretch reads NGTSPSRGSVQS. Repeat 9 spans residues 121–124; the sequence is PGAP. The span at 152–163 shows a compositional bias: low complexity; sequence GSPSSGGNPLSG. 4 consecutive repeat copies span residues 169-172, 183-185, 190-193, and 236-239. Phosphoserine occurs at positions 241 and 256. The residue at position 641 (C641) is a Cysteine methyl ester. A lipid anchor (S-farnesyl cysteine) is attached at C641. Positions 642–644 are cleaved as a propeptide — removed in mature form; that stretch reads SVS.

The protein belongs to the inositol 1,4,5-trisphosphate 5-phosphatase type IV family. In terms of assembly, interacts (when prenylated) with PDE6D; this is important for normal location in cilia. Detected in brain, heart, pancreas, testis and spleen.

It localises to the cytoplasm. It is found in the cytoskeleton. The protein localises to the cilium axoneme. The protein resides in the golgi apparatus. Its subcellular location is the golgi stack membrane. It localises to the cell membrane. It is found in the cell projection. The protein localises to the ruffle. The protein resides in the nucleus. It carries out the reaction a 1,2-diacyl-sn-glycero-3-phospho-(1D-myo-inositol-4,5-bisphosphate) + H2O = a 1,2-diacyl-sn-glycero-3-phospho-(1D-myo-inositol 4-phosphate) + phosphate. The catalysed reaction is a 1,2-diacyl-sn-glycero-3-phospho-(1D-myo-inositol-3,4,5-trisphosphate) + H2O = a 1,2-diacyl-sn-glycero-3-phospho-(1D-myo-inositol-3,4-bisphosphate) + phosphate. The enzyme catalyses a 1,2-diacyl-sn-glycero-3-phospho-(1D-myo-inositol-3,5-bisphosphate) + H2O = a 1,2-diacyl-sn-glycero-3-phospho-(1D-myo-inositol-3-phosphate) + phosphate. With respect to regulation, active in the presence of octyl-glucoside or Triton X-100, but completely inhibited by CTAB. Functionally, phosphatidylinositol (PtdIns) phosphatase that specifically hydrolyzes the 5-phosphate of phosphatidylinositol-3,4,5-trisphosphate (PtdIns(3,4,5)P3), phosphatidylinositol 4,5-bisphosphate (PtdIns(4,5)P2) and phosphatidylinositol 3,5-bisphosphate (PtdIns(3,5)P2). Specific for lipid substrates, inactive towards water soluble inositol phosphates. Plays an essential role in the primary cilium by controlling ciliary growth and phosphoinositide 3-kinase (PI3K) signaling and stability. This is Phosphatidylinositol polyphosphate 5-phosphatase type IV (INPP5E) from Homo sapiens (Human).